The sequence spans 699 residues: Serine/threonine-protein kinase PRR2 (699 aa).

A disordered region spans residues 168–193; sequence SSTKKNLANDISDNKHNNNSSNTIGH. Positions 184–193 are enriched in polar residues; that stretch reads NNNSSNTIGH. One can recognise a Protein kinase domain in the interval 361–653; the sequence is RDLDVVLGEG…INGILQDGWI (293 aa). Residues 367 to 375 and Lys-390 each bind ATP; that span reads LGEGSGGKV. Asp-484 serves as the catalytic Proton acceptor.

This sequence belongs to the protein kinase superfamily. Ser/Thr protein kinase family.

It catalyses the reaction L-seryl-[protein] + ATP = O-phospho-L-seryl-[protein] + ADP + H(+). It carries out the reaction L-threonyl-[protein] + ATP = O-phospho-L-threonyl-[protein] + ADP + H(+). In terms of biological role, protein kinase that functions as a regulator in the pheromone-induced mating pathway downstream of mitogen-activated protein kinase (MAPK) FUS3. Diminishes transcriptional induction of genes in response to pheromone signaling. The protein is Serine/threonine-protein kinase PRR2 (PRR2) of Saccharomyces cerevisiae (strain ATCC 204508 / S288c) (Baker's yeast).